Reading from the N-terminus, the 569-residue chain is Formate hydrogenlyase subunit 5 (569 aa).

Positions 538-569 (MTVVDVRKKKSKVVPYKELERYSIERKNSPLK) are excised as a propeptide.

The protein belongs to the complex I 49 kDa subunit family. In terms of assembly, FHL comprises of a formate dehydrogenase, unidentified electron carriers and a hydrogenase (isoenzyme 3). In this non-energy conserving pathway molecular hydrogen and carbodioxide from formate are released. [4Fe-4S] cluster is required as a cofactor. It depends on Ni(2+) as a cofactor.

The polypeptide is Formate hydrogenlyase subunit 5 (hycE) (Escherichia coli (strain K12)).